Here is a 427-residue protein sequence, read N- to C-terminus: Enolase (427 aa).

Gln163 provides a ligand contact to (2R)-2-phosphoglycerate. Glu205 functions as the Proton donor in the catalytic mechanism. Mg(2+) contacts are provided by Asp242, Glu285, and Asp312. Positions 337, 366, 367, and 388 each coordinate (2R)-2-phosphoglycerate. Lys337 functions as the Proton acceptor in the catalytic mechanism.

This sequence belongs to the enolase family. The cofactor is Mg(2+).

Its subcellular location is the cytoplasm. It is found in the secreted. The protein localises to the cell surface. It catalyses the reaction (2R)-2-phosphoglycerate = phosphoenolpyruvate + H2O. Its pathway is carbohydrate degradation; glycolysis; pyruvate from D-glyceraldehyde 3-phosphate: step 4/5. Catalyzes the reversible conversion of 2-phosphoglycerate (2-PG) into phosphoenolpyruvate (PEP). It is essential for the degradation of carbohydrates via glycolysis. This is Enolase from Burkholderia thailandensis (strain ATCC 700388 / DSM 13276 / CCUG 48851 / CIP 106301 / E264).